The sequence spans 337 residues: MLEKFERYPLTFGATAIEYLPRLTEALGGDVEIWAKREDCNSGLAMGGNKLRKLEYIVPDAIASNADTLVSIGGVQSNHTRMVAAVAAKLGMKCRLVQESWVPHEDAVYDRVGNILMTRLMGADSRIVDDGFDIGIRQSWEDAIQSVIDEGGKPYAIPAGASVHKYGGLGYVAFAEEVARQEADLGFKFDYIIVCVVTGSTQAGMIVGFAAQDRADRVIGIDASGTPEQTRSQVRQIVDNTAELVELGRPVREDEIVILNDYAYPAYGVPSNETNEAIRLAARTEAMITDPVYEGKSMQGMIDLTRKGFFPKGSKVLYAHLGGAPALNGYSYTYRNG.

N6-(pyridoxal phosphate)lysine is present on Lys-50. The Nucleophile role is filled by Ser-77.

It belongs to the ACC deaminase/D-cysteine desulfhydrase family. As to quaternary structure, homotrimer. The cofactor is pyridoxal 5'-phosphate.

It carries out the reaction 1-aminocyclopropane-1-carboxylate + H2O = 2-oxobutanoate + NH4(+). Functionally, catalyzes a cyclopropane ring-opening reaction, the irreversible conversion of 1-aminocyclopropane-1-carboxylate (ACC) to ammonia and alpha-ketobutyrate. Allows growth on ACC as a nitrogen source. In Rhizobium radiobacter (Agrobacterium tumefaciens), this protein is 1-aminocyclopropane-1-carboxylate deaminase.